Consider the following 242-residue polypeptide: tRNA (guanine-N(1)-)-methyltransferase (242 aa).

Residues glycine 112 and 131-136 (LGDFIL) contribute to the S-adenosyl-L-methionine site.

Belongs to the RNA methyltransferase TrmD family. As to quaternary structure, homodimer.

It is found in the cytoplasm. The enzyme catalyses guanosine(37) in tRNA + S-adenosyl-L-methionine = N(1)-methylguanosine(37) in tRNA + S-adenosyl-L-homocysteine + H(+). Specifically methylates guanosine-37 in various tRNAs. The polypeptide is tRNA (guanine-N(1)-)-methyltransferase (Crocosphaera subtropica (strain ATCC 51142 / BH68) (Cyanothece sp. (strain ATCC 51142))).